A 448-amino-acid chain; its full sequence is Probable D-serine dehydratase (448 aa).

The residue at position 119 (lysine 119) is an N6-(pyridoxal phosphate)lysine.

It belongs to the serine/threonine dehydratase family. DsdA subfamily. Requires pyridoxal 5'-phosphate as cofactor.

The enzyme catalyses D-serine = pyruvate + NH4(+). The chain is Probable D-serine dehydratase from Pseudomonas paraeruginosa (strain DSM 24068 / PA7) (Pseudomonas aeruginosa (strain PA7)).